The sequence spans 554 residues: CTP synthase (554 aa).

The tract at residues 1 to 265 (MTPLIFVTGG…DELVIDQFKL (265 aa)) is amidoligase domain. Ser13 contributes to the CTP binding site. UTP is bound at residue Ser13. ATP is bound by residues 14-19 (SLGKGI) and Asp71. Mg(2+)-binding residues include Asp71 and Glu139. Residues 146 to 148 (DIE), 186 to 191 (KTKPTQ), and Lys222 contribute to the CTP site. UTP-binding positions include 186–191 (KTKPTQ) and Lys222. One can recognise a Glutamine amidotransferase type-1 domain in the interval 292–545 (TIAVVGKYVD…VRAAREKKAG (254 aa)). Gly353 contacts L-glutamine. Cys380 (nucleophile; for glutamine hydrolysis) is an active-site residue. Residues 381–384 (YGMQ), Glu404, and Arg471 each bind L-glutamine. Catalysis depends on residues His518 and Glu520.

This sequence belongs to the CTP synthase family. Homotetramer.

It catalyses the reaction UTP + L-glutamine + ATP + H2O = CTP + L-glutamate + ADP + phosphate + 2 H(+). The catalysed reaction is L-glutamine + H2O = L-glutamate + NH4(+). The enzyme catalyses UTP + NH4(+) + ATP = CTP + ADP + phosphate + 2 H(+). It participates in pyrimidine metabolism; CTP biosynthesis via de novo pathway; CTP from UDP: step 2/2. Its activity is regulated as follows. Allosterically activated by GTP, when glutamine is the substrate; GTP has no effect on the reaction when ammonia is the substrate. The allosteric effector GTP functions by stabilizing the protein conformation that binds the tetrahedral intermediate(s) formed during glutamine hydrolysis. Inhibited by the product CTP, via allosteric rather than competitive inhibition. Its function is as follows. Catalyzes the ATP-dependent amination of UTP to CTP with either L-glutamine or ammonia as the source of nitrogen. Regulates intracellular CTP levels through interactions with the four ribonucleotide triphosphates. In Xanthomonas campestris pv. campestris (strain 8004), this protein is CTP synthase.